The primary structure comprises 176 residues: Ribosome maturation factor RimM (176 aa).

Positions 93–166 constitute a PRC barrel domain; sequence EGEYYHADLI…RVVIEMPGEI (74 aa).

The protein belongs to the RimM family. Binds ribosomal protein uS19.

It localises to the cytoplasm. In terms of biological role, an accessory protein needed during the final step in the assembly of 30S ribosomal subunit, possibly for assembly of the head region. Essential for efficient processing of 16S rRNA. May be needed both before and after RbfA during the maturation of 16S rRNA. It has affinity for free ribosomal 30S subunits but not for 70S ribosomes. This is Ribosome maturation factor RimM from Rhodopseudomonas palustris (strain BisA53).